The sequence spans 356 residues: Protein-L-isoaspartate O-methyltransferase domain-containing protein 1 (356 aa).

Gly2 is lipidated: N-myristoyl glycine. The active site involves Ser64. AdoMet binding motif regions lie at residues 85-94 (LNLGSGTGYL), 160-164 (YDRIY), and 181-191 (LKVGGILVMPI). The interval 240–250 (VRNLQDLARIY) is BC-box. The disordered stretch occupies residues 299–331 (PLDSEEDEKMEEDKEEEEKEPGEALKPEEPPQN). Positions 301-318 (DSEEDEKMEEDKEEEEKE) are enriched in acidic residues. Residues 319–331 (PGEALKPEEPPQN) show a composition bias toward basic and acidic residues. Residues 340–343 (LPLP) are CUL-box.

The protein belongs to the methyltransferase superfamily. L-isoaspartyl/D-aspartyl protein methyltransferase family. As to quaternary structure, component of the probable ECS(PCMTD1) E3 ubiquitin-protein ligase complex, at least composed of CUL5, ELOB, ELOC, RBX2 and PCMTD1. Interacts (via the BC-box) with ELOB and ELOC; the interaction is direct and stabilizes PCMTD1.

The protein resides in the cytoplasm. It is found in the membrane. Its function is as follows. Substrate recognition component of an ECS (Elongin BC-CUL5-SOCS-box protein) E3 ubiquitin ligase complex which mediates the ubiquitination and subsequent proteasomal degradation of target proteins. Specifically binds to the methyltransferase cofactor S-adenosylmethionine (AdoMet) via the N-terminal AdoMet binding motif, but does not display methyltransferase activity. May provide an alternate maintenance pathway for modified proteins by acting as a damage-specific E3 ubiquitin ligase adaptor protein. The polypeptide is Protein-L-isoaspartate O-methyltransferase domain-containing protein 1 (PCMTD1) (Bos taurus (Bovine)).